The chain runs to 341 residues: Protein pelota homolog (341 aa).

Belongs to the eukaryotic release factor 1 family. Pelota subfamily. Monomer. A divalent metal cation serves as cofactor.

Its subcellular location is the cytoplasm. Functionally, may function in recognizing stalled ribosomes, interact with stem-loop structures in stalled mRNA molecules, and effect endonucleolytic cleavage of the mRNA. May play a role in the release non-functional ribosomes and degradation of damaged mRNAs. Has endoribonuclease activity. The sequence is that of Protein pelota homolog from Metallosphaera sedula (strain ATCC 51363 / DSM 5348 / JCM 9185 / NBRC 15509 / TH2).